The primary structure comprises 199 residues: MFTQKSFEIFKIEGLEPRMTEIRSEIQPVFSEIGQKLLTELSVKIPNQEFYFHIAQHRRRTANAPENTWSAISTKVRGYKMEAHFQLGIWEDYVFIYLSMIDQPKKQKEYANLLTSLSVEKLLTEDFVISKDHTKAETYPLSAFREAAERLGKVKKSELEIGRVWPKERFNSKEDSIILAEMIETIDQLLPIYQKLMEV.

The protein belongs to the UPF0637 family.

The protein is UPF0637 protein YsbB (ysbB) of Lactococcus lactis subsp. lactis (strain IL1403) (Streptococcus lactis).